The sequence spans 76 residues: MSRVCEICGKGTVKANRITRRGKAKKEGGVGKHITKTSRRRQKPNLVKVKAIVDGRPKRIKVCTKCLKSGRVERAY.

The interval 21–42 (RGKAKKEGGVGKHITKTSRRRQ) is disordered. Residues 33 to 42 (HITKTSRRRQ) show a composition bias toward basic residues.

Belongs to the bacterial ribosomal protein bL28 family.

This is Large ribosomal subunit protein bL28 from Halothermothrix orenii (strain H 168 / OCM 544 / DSM 9562).